Consider the following 354-residue polypeptide: Serine/threonine-protein phosphatase 2A activator 2 (354 aa).

This sequence belongs to the PTPA-type PPIase family.

The protein localises to the cytoplasm. It carries out the reaction [protein]-peptidylproline (omega=180) = [protein]-peptidylproline (omega=0). In terms of biological role, PPIases accelerate the folding of proteins. It catalyzes the cis-trans isomerization of proline imidic peptide bonds in oligopeptides. Acts as a regulatory subunit for PP2A-like phosphatases modulating their activity or substrate specificity, probably by inducing a conformational change in the catalytic subunit, a direct target of the PPIase. Can reactivate inactive phosphatase PP2A-phosphatase methylesterase complexes (PP2Ai) in presence of ATP and Mg(2+) by dissociating the inactive form from the complex. This chain is Serine/threonine-protein phosphatase 2A activator 2 (RRD2), found in Yarrowia lipolytica (strain CLIB 122 / E 150) (Yeast).